The sequence spans 623 residues: Membralin-like protein At1g60995 (623 aa).

The chain crosses the membrane as a helical span at residues 24–44 (GFLEYTYLFVAITLFCILVVM). Residues 99-119 (SLEVSKTDQESSTSEENTDDT) form a disordered region. 4 helical membrane passes run 315–335 (GVLM…SFTL), 363–383 (IFVH…ILFF), 392–412 (LLAF…LISV), and 424–444 (FFLL…YGFS). Disordered stretches follow at residues 506-567 (NRTT…QAGA) and 602-623 (EAQV…LSVD). Residues 514–531 (PSGPNHTTPNQNTETRSF) are compositionally biased toward polar residues.

The protein belongs to the membralin family.

Its subcellular location is the membrane. This is Membralin-like protein At1g60995 from Arabidopsis thaliana (Mouse-ear cress).